Reading from the N-terminus, the 838-residue chain is V-type proton ATPase 116 kDa subunit a 1 (838 aa).

The Cytoplasmic segment spans residues Met1–Glu388. A phosphothreonine mark is found at Thr250 and Thr360. Tyr364 is subject to Phosphotyrosine. The chain crosses the membrane as a helical span at residues Ile389–Phe407. The Vacuolar segment spans residues Gly408–Asp409. The helical transmembrane segment at Phe410–Arg426 threads the bilayer. The Cytoplasmic portion of the chain corresponds to Glu427 to Ser441. The helical transmembrane segment at Met442–Ser471 threads the bilayer. Topologically, residues Leu472–Ser535 are vacuolar. Residues Phe536–Leu555 form a helical membrane-spanning segment. Residues Ser556–Phe573 lie on the Cytoplasmic side of the membrane. The helical transmembrane segment at Ile574–Lys594 threads the bilayer. The Vacuolar segment spans residues Trp595 to Phe639. The helical transmembrane segment at Leu640–Leu659 threads the bilayer. The Cytoplasmic segment spans residues Arg660–Thr725. The chain crosses the membrane as a helical span at residues Ile726–Ala750. Over Gln751 to Ala771 the chain is Vacuolar. A helical membrane pass occupies residues Gly772 to Glu810. Topologically, residues Phe811–Glu838 are cytoplasmic.

It belongs to the V-ATPase 116 kDa subunit family. V-ATPase is a heteromultimeric enzyme made up of two complexes: the ATP-hydrolytic V1 complex and the proton translocation V0 complex. The V1 complex consists of three catalytic AB heterodimers that form a heterohexamer, three peripheral stalks each consisting of EG heterodimers, one central rotor including subunits D and F, and the regulatory subunits C and H. The proton translocation complex V0 consists of the proton transport subunit a, a ring of proteolipid subunits c9c'', rotary subunit d, subunits e and f, and the accessory subunits ATP6AP1/Ac45 and ATP6AP2/PRR. Interacts with SPAAR. In terms of tissue distribution, expressed in brain (at protein level). Expressed in heart, kidney, liver, spleen, and to a lesser extent in brain.

The protein localises to the cytoplasmic vesicle. It localises to the clathrin-coated vesicle membrane. The protein resides in the secretory vesicle. Its subcellular location is the synaptic vesicle membrane. It is found in the melanosome. Subunit of the V0 complex of vacuolar(H+)-ATPase (V-ATPase), a multisubunit enzyme composed of a peripheral complex (V1) that hydrolyzes ATP and a membrane integral complex (V0) that translocates protons. V-ATPase is responsible for the acidification of various organelles, such as lysosomes, endosomes, the trans-Golgi network, and secretory granules, including synaptic vesicles. In certain cell types, can be exported to the plasma membrane, where it is involved in the acidification of the extracellular environment. Required for assembly and activity of the vacuolar ATPase. Through its action on compartment acidification, plays an essential role in neuronal development in terms of integrity and connectivity of neurons. The sequence is that of V-type proton ATPase 116 kDa subunit a 1 (Atp6v0a1) from Rattus norvegicus (Rat).